The chain runs to 50 residues: Protein PsbN (50 aa).

The helical transmembrane segment at 14–34 (IAVTILAILLALTGFGLWSAF) threads the bilayer.

This sequence belongs to the PsbN family.

The protein resides in the cellular thylakoid membrane. In terms of biological role, may play a role in photosystem I and II biogenesis. The chain is Protein PsbN from Prochlorococcus marinus (strain MIT 9215).